The primary structure comprises 397 residues: Acetate kinase 2 (397 aa).

Asn10 is a Mg(2+) binding site. Lys17 contacts ATP. Arg90 is a binding site for substrate. Asp147 functions as the Proton donor/acceptor in the catalytic mechanism. ATP contacts are provided by residues 207–211 (HLGNG), 281–283 (DCR), and 329–333 (GIGEN). Residue Glu383 participates in Mg(2+) binding.

It belongs to the acetokinase family. As to quaternary structure, homodimer. Mg(2+) is required as a cofactor. Requires Mn(2+) as cofactor.

Its subcellular location is the cytoplasm. The catalysed reaction is acetate + ATP = acetyl phosphate + ADP. The protein operates within metabolic intermediate biosynthesis; acetyl-CoA biosynthesis; acetyl-CoA from acetate: step 1/2. Functionally, catalyzes the formation of acetyl phosphate from acetate and ATP. Can also catalyze the reverse reaction. The polypeptide is Acetate kinase 2 (Photobacterium profundum (strain SS9)).